Here is a 453-residue protein sequence, read N- to C-terminus: Probable glycine dehydrogenase (decarboxylating) subunit 1 (453 aa).

It belongs to the GcvP family. N-terminal subunit subfamily. The glycine cleavage system is composed of four proteins: P, T, L and H. In this organism, the P 'protein' is a heterodimer of two subunits.

The catalysed reaction is N(6)-[(R)-lipoyl]-L-lysyl-[glycine-cleavage complex H protein] + glycine + H(+) = N(6)-[(R)-S(8)-aminomethyldihydrolipoyl]-L-lysyl-[glycine-cleavage complex H protein] + CO2. In terms of biological role, the glycine cleavage system catalyzes the degradation of glycine. The P protein binds the alpha-amino group of glycine through its pyridoxal phosphate cofactor; CO(2) is released and the remaining methylamine moiety is then transferred to the lipoamide cofactor of the H protein. This Nitrosomonas europaea (strain ATCC 19718 / CIP 103999 / KCTC 2705 / NBRC 14298) protein is Probable glycine dehydrogenase (decarboxylating) subunit 1.